A 224-amino-acid chain; its full sequence is UPF0758 protein PST_0473 (224 aa).

Residues 102–224 (ALESPQAVRD…PLSMAEYGWM (123 aa)) form the MPN domain. Zn(2+)-binding residues include His173, His175, and Asp186. Residues 173–186 (HNHPSGVAEPSQAD) carry the JAMM motif motif.

It belongs to the UPF0758 family.

This Stutzerimonas stutzeri (strain A1501) (Pseudomonas stutzeri) protein is UPF0758 protein PST_0473.